A 63-amino-acid polypeptide reads, in one-letter code: Large ribosomal subunit protein uL29 (63 aa).

Belongs to the universal ribosomal protein uL29 family.

In Photobacterium profundum (strain SS9), this protein is Large ribosomal subunit protein uL29.